Here is a 435-residue protein sequence, read N- to C-terminus: Serine--tRNA ligase (435 aa).

An L-serine-binding site is contributed by 241–243 (TAE). Position 272 to 274 (272 to 274 (RAE)) interacts with ATP. L-serine is bound at residue Glu295. 359 to 362 (EISS) contributes to the ATP binding site. Position 395 (Ser395) interacts with L-serine.

Belongs to the class-II aminoacyl-tRNA synthetase family. Type-1 seryl-tRNA synthetase subfamily. In terms of assembly, homodimer. The tRNA molecule binds across the dimer.

The protein resides in the cytoplasm. The enzyme catalyses tRNA(Ser) + L-serine + ATP = L-seryl-tRNA(Ser) + AMP + diphosphate + H(+). It catalyses the reaction tRNA(Sec) + L-serine + ATP = L-seryl-tRNA(Sec) + AMP + diphosphate + H(+). Its pathway is aminoacyl-tRNA biosynthesis; selenocysteinyl-tRNA(Sec) biosynthesis; L-seryl-tRNA(Sec) from L-serine and tRNA(Sec): step 1/1. Its function is as follows. Catalyzes the attachment of serine to tRNA(Ser). Is also able to aminoacylate tRNA(Sec) with serine, to form the misacylated tRNA L-seryl-tRNA(Sec), which will be further converted into selenocysteinyl-tRNA(Sec). The polypeptide is Serine--tRNA ligase (Haemophilus ducreyi (strain 35000HP / ATCC 700724)).